Consider the following 122-residue polypeptide: Large ribosomal subunit protein uL14c (122 aa).

This sequence belongs to the universal ribosomal protein uL14 family. As to quaternary structure, part of the 50S ribosomal subunit.

It localises to the plastid. The protein localises to the chloroplast. Its function is as follows. Binds to 23S rRNA. In Gossypium barbadense (Sea Island cotton), this protein is Large ribosomal subunit protein uL14c.